The chain runs to 219 residues: Small ribosomal subunit protein uS3c (219 aa).

Residues 39–111 form the KH type-2 domain; it reads IRKFLMEKIK…NSFFNVKINF (73 aa).

It belongs to the universal ribosomal protein uS3 family. As to quaternary structure, part of the 30S ribosomal subunit.

It localises to the plastid. The polypeptide is Small ribosomal subunit protein uS3c (rps3) (Euglena longa (Euglenophycean alga)).